Consider the following 860-residue polypeptide: Leucine--tRNA ligase (860 aa).

The 'HIGH' region motif lies at 42-52; the sequence is PYPSGRLHMGH. A 'KMSKS' region motif is present at residues 619-623; it reads KMSKS. Lys622 lines the ATP pocket.

Belongs to the class-I aminoacyl-tRNA synthetase family.

The protein resides in the cytoplasm. It carries out the reaction tRNA(Leu) + L-leucine + ATP = L-leucyl-tRNA(Leu) + AMP + diphosphate. The sequence is that of Leucine--tRNA ligase from Edwardsiella ictaluri (strain 93-146).